Reading from the N-terminus, the 170-residue chain is Large ribosomal subunit protein uL10 (170 aa).

It belongs to the universal ribosomal protein uL10 family. As to quaternary structure, part of the ribosomal stalk of the 50S ribosomal subunit. The N-terminus interacts with L11 and the large rRNA to form the base of the stalk. The C-terminus forms an elongated spine to which L12 dimers bind in a sequential fashion forming a multimeric L10(L12)X complex.

Functionally, forms part of the ribosomal stalk, playing a central role in the interaction of the ribosome with GTP-bound translation factors. This Corynebacterium urealyticum (strain ATCC 43042 / DSM 7109) protein is Large ribosomal subunit protein uL10.